The sequence spans 264 residues: Small ribosomal subunit protein uS2 (264 aa).

A disordered region spans residues Gly-225–Glu-264.

Belongs to the universal ribosomal protein uS2 family.

In Corynebacterium glutamicum (strain R), this protein is Small ribosomal subunit protein uS2.